Reading from the N-terminus, the 362-residue chain is 3-dehydroquinate synthase (362 aa).

Residues 71 to 76 (DGEQYK), 105 to 109 (GVVGD), 129 to 130 (TT), Lys142, Lys151, and 169 to 172 (CLNT) contribute to the NAD(+) site. Zn(2+) contacts are provided by Glu184, His247, and His264.

The protein belongs to the sugar phosphate cyclases superfamily. Dehydroquinate synthase family. Requires Co(2+) as cofactor. Zn(2+) serves as cofactor. It depends on NAD(+) as a cofactor.

It localises to the cytoplasm. The enzyme catalyses 7-phospho-2-dehydro-3-deoxy-D-arabino-heptonate = 3-dehydroquinate + phosphate. The protein operates within metabolic intermediate biosynthesis; chorismate biosynthesis; chorismate from D-erythrose 4-phosphate and phosphoenolpyruvate: step 2/7. Functionally, catalyzes the conversion of 3-deoxy-D-arabino-heptulosonate 7-phosphate (DAHP) to dehydroquinate (DHQ). This is 3-dehydroquinate synthase from Enterobacter sp. (strain 638).